Consider the following 2417-residue polypeptide: Protein pad-1 (2417 aa).

Disordered stretches follow at residues 409-437 (SSNS…DREG), 449-475 (SNKD…PDEE), 994-1029 (TSTG…DDDT), and 1957-2032 (SMSN…RRDP). Low complexity-rich tracts occupy residues 456-468 (TSVT…NASS) and 1002-1024 (DPSA…VVPA). Residues 1969 to 1982 (DNPSGSTRNSTLSL) show a composition bias toward polar residues. The span at 2003–2014 (SKSENMKIEKKS) shows a compositional bias: basic and acidic residues. Residues 2015-2025 (SSNLRASIKDT) are compositionally biased toward polar residues.

Belongs to the DOP1 family.

May be involved in protein traffic between late Golgi and early endosomes. Essential for cell patterning during gastrulation. The chain is Protein pad-1 (pad-1) from Caenorhabditis elegans.